The chain runs to 1691 residues: Collagen alpha-6(IV) chain (1691 aa).

An N-terminal signal peptide occupies residues 1–22 (MLINKLWLLLVTLCLTEELAAA). Residues 23 to 46 (GEKSYGKPCGGQDCSGSCQCFPEK) are 7S domain. The tract at residues 47–1463 (GARGRPGPIG…FGMPGMPGQS (1417 aa)) is triple-helical region. Disordered regions lie at residues 108–338 (IPGH…EGQK), 404–473 (GFPG…LGLK), 486–881 (GGVP…KGSP), 915–1099 (GIPG…KGRD), and 1185–1459 (THGT…MPGM). A glycan (N-linked (GlcNAc...) asparagine) is linked at asparagine 127. Residues 185-197 (PQGAPGFPGAVGP) are compositionally biased toward low complexity. Positions 198–213 (AGPPGLQGPPGPPGPL) are enriched in pro residues. Composition is skewed to low complexity over residues 311-320 (QGPPGQQGKK) and 421-431 (GAAGLPGRDGL). 2 stretches are compositionally biased toward pro residues: residues 432 to 443 (PGPPGPPGPPSP) and 491 to 502 (TGPPGEPGPPGP). Over residues 503–512 (WGLIGLPGLK) the composition is skewed to low complexity. Positions 515 to 517 (RGD) match the Cell attachment site motif. Over residues 526-541 (PAGAPGLVGPLGPSGP) the composition is skewed to low complexity. The short motif at 560–562 (RGD) is the Cell attachment site element. Over residues 588–599 (GLPGDGGQGFPG) the composition is skewed to gly residues. 4 stretches are compositionally biased toward low complexity: residues 641–652 (LPGQQGLPGSKG), 660–703 (PGSY…GSPG), 722–735 (LPGF…DGLP), and 802–820 (SPGT…SSGP). A compositionally biased stretch (basic residues) spans 842 to 851 (PGKKGTRGKK). The span at 853 to 878 (PPGSIVKKGLPGLKGLPGNPGLVGLK) shows a compositional bias: low complexity. The Cell attachment site signature appears at 986–988 (RGD). The segment covering 1055–1068 (SPGLPGASGLPGLK) has biased composition (low complexity). Gly residues predominate over residues 1210–1220 (GYPGIGIGAPG). A compositionally biased stretch (low complexity) spans 1234 to 1253 (PGLQGPAGLPGAPGISLPSL). Over residues 1275–1284 (PAGPPGPPGP) the composition is skewed to pro residues. Over residues 1360-1371 (SGLQGDPGQTPT) the composition is skewed to polar residues. Low complexity-rich tracts occupy residues 1384 to 1397 (LPGI…TGDP) and 1429 to 1459 (ALGD…MPGM). The region spanning 1467-1691 (GYTLVKHSQS…SRCQVCMKSL (225 aa)) is the Collagen IV NC1 domain. 6 disulfides stabilise this stretch: cysteine 1482-cysteine 1571, cysteine 1515-cysteine 1568, cysteine 1527-cysteine 1533, cysteine 1590-cysteine 1687, cysteine 1624-cysteine 1684, and cysteine 1636-cysteine 1643.

It belongs to the type IV collagen family. There are six type IV collagen isoforms, alpha 1(IV)-alpha 6(IV), each of which can form a triple helix structure with 2 other chains to generate type IV collagen network. Post-translationally, prolines at the third position of the tripeptide repeating unit (G-X-Y) are hydroxylated in some or all of the chains. In terms of processing, type IV collagens contain numerous cysteine residues which are involved in inter- and intramolecular disulfide bonding. 12 of these, located in the NC1 domain, are conserved in all known type IV collagens. The trimeric structure of the NC1 domains is stabilized by covalent bonds between Lys and Met residues.

The protein resides in the secreted. Its subcellular location is the extracellular space. The protein localises to the extracellular matrix. It localises to the basement membrane. Functionally, type IV collagen is the major structural component of glomerular basement membranes (GBM), forming a 'chicken-wire' meshwork together with laminins, proteoglycans and entactin/nidogen. This Homo sapiens (Human) protein is Collagen alpha-6(IV) chain (COL4A6).